The primary structure comprises 180 residues: Major urinary protein 1 (180 aa).

The signal sequence occupies residues 1 to 18 (MKMLLLLCLGLTLVCVHA). Residues C82 and C175 are joined by a disulfide bond.

Belongs to the calycin superfamily. Lipocalin family. Abundant in the urine of adult male mice but absent from that of females.

The protein resides in the secreted. Functionally, binds pheromones that are released from drying urine of males. These pheromones affect the sexual behavior of females. This Mus musculus (Mouse) protein is Major urinary protein 1 (Mup1).